A 315-amino-acid chain; its full sequence is Putative olfactory receptor 2I1 (315 aa).

Over 1 to 24 (MKANYSAEERFLLLGFSDWPSLQP) the chain is Extracellular. The helical transmembrane segment at 25–48 (VLFALVLLCYLLTLTGNSALVLLA) threads the bilayer. At 49–56 (VRDPRLHT) the chain is on the cytoplasmic side. Residues 57 to 78 (PMYYFLCHLALVDAGFTTSVVP) traverse the membrane as a helical segment. Residues 79 to 99 (PLLANLRGPALWLPRSHCTAQ) lie on the Extracellular side of the membrane. Cysteines 96 and 188 form a disulfide. A helical membrane pass occupies residues 100-119 (LCASLALGSAECVLLAVMAL). Topologically, residues 120–138 (DRAAAVCRPLRYAGLVSPR) are cytoplasmic. A helical transmembrane segment spans residues 139–157 (LCRTLASASWLSGLTNSVA). The Extracellular segment spans residues 158–195 (QTALLAERPLCAPRLLDHFICELPALLKLACGGDGDTT). A helical membrane pass occupies residues 196–219 (ENQMFAARVVILLLPFAVILASYG). The Cytoplasmic segment spans residues 220–236 (AVARAVCCMRFSGGRRR). Residues 237-259 (AVGTCGSHLTAVCLFYGSAIYTY) traverse the membrane as a helical segment. Over 260–272 (LQPAQRYNQARGK) the chain is Extracellular. A helical transmembrane segment spans residues 273 to 292 (FVSLFYTVVTPALNPLIYTL). The Cytoplasmic portion of the chain corresponds to 293–315 (RNKKVKGAARRLLRSLGRGQAGQ).

It belongs to the G-protein coupled receptor 1 family.

The protein localises to the cell membrane. Functionally, odorant receptor. This is Putative olfactory receptor 2I1 from Homo sapiens (Human).